A 411-amino-acid polypeptide reads, in one-letter code: G2/mitotic-specific cyclin cig2 (411 aa).

The short motif at 51 to 60 is the Destruction box element; it reads RTVLSDVSNV. The disordered stretch occupies residues 57–89; it reads VSNVGKNNADEKDTKKAKRSFDESNLSTNEEAD. Positions 64–78 are enriched in basic and acidic residues; the sequence is NADEKDTKKAKRSFD. The region spanning 139–265 is the Cyclin N-terminal domain; sequence EIFEYIRKLD…MLNVLNFDLS (127 aa). The interval 181–273 is interaction with pop1; it reads SNFCLMPETL…LSYPSPLNFL (93 aa).

Belongs to the cyclin family. Cyclin AB subfamily. In terms of assembly, associates with cdc2, res2 and rum1. Interacts with pop1 only when phosphorylated. Post-translationally, phosphorylated.

The protein resides in the nucleus. The protein localises to the cytoplasm. Its subcellular location is the cytoskeleton. It is found in the microtubule organizing center. It localises to the spindle pole body. Its function is as follows. Essential for the control of the cell cycle at the G2/M and G1/S (mitosis) transition. Interacts with the cdc2 protein kinase to form MPF. Interaction with res2 promotes the phosphorylation of res1 and inhibits MBF-dependent gene transcription. Forms an autoregulating feedback-inhibition loop with MBF which is important for normal regulation of the cell cycle. G2/M cyclins accumulate steadily during G2 and are abruptly destroyed at mitosis. Negatively regulates conjugation via interacting with cell cycle 'start' genes. Degraded by skp1, pop1 and pop2 in the G2 and M phases of the cell cycle. This Schizosaccharomyces pombe (strain 972 / ATCC 24843) (Fission yeast) protein is G2/mitotic-specific cyclin cig2 (cig2).